A 154-amino-acid polypeptide reads, in one-letter code: MPKVAVGGTFQYLHDGHARLIEKAFEIAGSGKVYIGLTSDEMLQKNHSVESYKIRRSRLLEYIKKMGVPEEKYEVTRLNDPCGPTIEEDFDHIIVSPETYPVALKINTIREKKGKKPLEIVYVEYVMAEDGIPISSTRISKGEIDRHGRLKKEA.

This sequence belongs to the eukaryotic CoaD family.

It localises to the cytoplasm. It catalyses the reaction (R)-4'-phosphopantetheine + ATP + H(+) = 3'-dephospho-CoA + diphosphate. It functions in the pathway cofactor biosynthesis; coenzyme A biosynthesis. In terms of biological role, reversibly transfers an adenylyl group from ATP to 4'-phosphopantetheine, yielding dephospho-CoA (dPCoA) and pyrophosphate. This is Phosphopantetheine adenylyltransferase from Methanosarcina mazei (strain ATCC BAA-159 / DSM 3647 / Goe1 / Go1 / JCM 11833 / OCM 88) (Methanosarcina frisia).